The sequence spans 874 residues: MLKKFDKKDEESGGGSNPLQHLEKSAVLQEARVFNETPINPRKCAHILTKILYLINQGEHLGTTEATEAFFAMTKLFQSNDPTLRRMCYLTIKEMSCIAEDVIIVTSSLTKDMTGKEDNYRGPAVRALCQITDSTMLQAVERYMKQAIVDKVPSVSSSALVSSLHLLKCSFDVVKRWVNEAQEAASSDNIMVQYHALGLLYHVRKNDRLAVSKMISKFTRHGLKSPFAYCMMIRVASKQLEEEDGSRDSPLFDFIESCLRNKHEMVVYEAASAIVNLPGCSAKELAPAVSVLQLFCSSPKAALRYAAVRTLNKVAMKHPSAVTACNLDLENLVTDSNRSIATLAITTLLKTGSESSIDRLMKQISSFMSEISDEFKVVVVQAISALCQKYPRKHAVLMNFLFTMLREEGGFEYKRAIVDCIISIIEENSESKETGLSHLCEFIEDCEFTVLATRILHLLGQEGPKTNNPSKYIRFIYNRVVLEHEEVRAGAVSALAKFGAQNEEMLPSILVLLKRCVMDDDNEVRDRATFYLNVLEQKQKALNAGYILNGLTVSIPGLEKALQQYTLEPSEKPFDLKSVPLATTPMTEQRPESTSTAAVKQPEKVAATRQEIFQEQLAAVPEFQGLGPLFKSSPEPVALTESETEYVIRCTKHTFSDHLVFQFDCTNTLNDQTLENVTVQMEPTEAYEVLSYVPVRSLPYNQPGTCYTLVALPKEDPTAVACTFSCVMKFTVKDCDPNTGEIDEEGYEDEYVLEDLEVTVADHIQKVMKVNFEAAWDEVGDEFEKEETFTLSTIKTLEEAVGNIVKFLGMHPCERSDKVPENKNTHTLLLAGVFRGGHDILVRSRLLLLDTVTMQVTARSSEELPVDIILASVG.

A compositionally biased stretch (basic and acidic residues) spans 1-11 (MLKKFDKKDEE). The interval 1–21 (MLKKFDKKDEESGGGSNPLQH) is disordered. HEAT repeat units lie at residues 64–101 (TEAT…IAED), 283–320 (KELA…KHPS), 322–355 (VTAC…GSES), and 356–392 (SIDR…KYPR). T594 is subject to Phosphothreonine. The interval 609 to 874 (RQEIFQEQLA…PVDIILASVG (266 aa)) is interaction with ZNF289/ARFGAP2.

Belongs to the COPG family. As to quaternary structure, oligomeric complex that consists of at least the alpha, beta, beta', gamma, delta, epsilon and zeta subunits. Interacts with ZNF289/ARFGAP2 through its C-terminal appendage domain. Interacts with EGFR upon EGF treatment; interaction is essential for regulation of EGF-dependent nuclear transport of EGFR by retrograde trafficking from the Golgi to the ER. The coatomer interacts with KDEL receptors; the interaction is important for retrograde trafficking of KDEL-bearing proteins from the Golgi to the endoplasmic reticulum. Interacts with COPB1. Interacts with TMED10 (via C-terminus). Interacts with TMED2, TMED3, TMED7 and TMED9.

It localises to the cytoplasm. It is found in the cytosol. The protein localises to the golgi apparatus membrane. Its subcellular location is the cytoplasmic vesicle. The protein resides in the COPI-coated vesicle membrane. Its function is as follows. The coatomer is a cytosolic protein complex that binds to dilysine motifs and reversibly associates with Golgi non-clathrin-coated vesicles, which further mediate biosynthetic protein transport from the ER, via the Golgi up to the trans Golgi network. Coatomer complex is required for budding from Golgi membranes, and is essential for the retrograde Golgi-to-ER transport of dilysine-tagged proteins. In mammals, the coatomer can only be recruited by membranes associated to ADP-ribosylation factors (ARFs), which are small GTP-binding proteins; the complex also influences the Golgi structural integrity, as well as the processing, activity, and endocytic recycling of LDL receptors. Required for limiting lipid storage in lipid droplets. Involved in lipid homeostasis by regulating the presence of perilipin family members PLIN2 and PLIN3 at the lipid droplet surface and promoting the association of adipocyte triglyceride lipase (PNPLA2) with the lipid droplet surface to mediate lipolysis. This Rattus norvegicus (Rat) protein is Coatomer subunit gamma-1 (Copg1).